The chain runs to 271 residues: Mannosyl-3-phosphoglycerate phosphatase (271 aa).

The active-site Nucleophile is D13. Residues D13, D15, and D214 each coordinate Mg(2+).

It belongs to the HAD-like hydrolase superfamily. MPGP family. Mg(2+) is required as a cofactor.

Its subcellular location is the cytoplasm. The enzyme catalyses 2-O-(alpha-D-mannosyl)-3-phosphoglycerate + H2O = (2R)-2-O-(alpha-D-mannosyl)-glycerate + phosphate. In Shigella dysenteriae serotype 1 (strain Sd197), this protein is Mannosyl-3-phosphoglycerate phosphatase (yedP).